The sequence spans 469 residues: 3-isopropylmalate dehydratase large subunit (469 aa).

Cysteine 349, cysteine 410, and cysteine 413 together coordinate [4Fe-4S] cluster.

The protein belongs to the aconitase/IPM isomerase family. LeuC type 1 subfamily. In terms of assembly, heterodimer of LeuC and LeuD. [4Fe-4S] cluster serves as cofactor.

The enzyme catalyses (2R,3S)-3-isopropylmalate = (2S)-2-isopropylmalate. It functions in the pathway amino-acid biosynthesis; L-leucine biosynthesis; L-leucine from 3-methyl-2-oxobutanoate: step 2/4. Functionally, catalyzes the isomerization between 2-isopropylmalate and 3-isopropylmalate, via the formation of 2-isopropylmaleate. This Neisseria meningitidis serogroup C / serotype 2a (strain ATCC 700532 / DSM 15464 / FAM18) protein is 3-isopropylmalate dehydratase large subunit.